Consider the following 459-residue polypeptide: ERBB receptor feedback inhibitor 1 (459 aa).

Residue Ser2 is modified to N-acetylserine. A phosphothreonine mark is found at Thr126 and Thr130. Positions 227 to 352 are disordered; sequence QNRVVPDPNP…VMPPTQSFAP (126 aa). 2 positions are modified to phosphoserine: Ser250 and Ser271. Over residues 264 to 273 the composition is skewed to polar residues; it reads SSCTHRASPS. The span at 282-291 shows a compositional bias: pro residues; it reads PPRVPIPPRP. The residue at position 300 (Ser300) is a Phosphoserine. The span at 310 to 323 shows a compositional bias: basic and acidic residues; it reads DEDRPPKVPPREPL. The span at 324–335 shows a compositional bias: polar residues; it reads SRSNSRTPSPKS. The tract at residues 332-361 is interaction with EGFR and ERBB2 and regulation of EGFR activation; sequence SPKSLPSYLNGVMPPTQSFAPDPKYVSSKA. Residue Ser458 is modified to Phosphoserine.

Belongs to the MIG6 family. In terms of assembly, interacts with EGFR and ERBB2.

It localises to the cytoplasm. Its subcellular location is the cell membrane. It is found in the nucleus. Its function is as follows. Negative regulator of EGFR signaling in skin morphogenesis. Acts as a negative regulator for several EGFR family members, including ERBB2, ERBB3 and ERBB4. Inhibits EGFR catalytic activity by interfering with its dimerization. Inhibits autophosphorylation of EGFR, ERBB2 and ERBB4. Important for normal keratinocyte proliferation and differentiation. Plays a role in modulating the response to steroid hormones in the uterus. Required for normal response to progesterone in the uterus and for fertility. Mediates epithelial estrogen responses in the uterus by regulating ESR1 levels and activation. Important for regulation of endometrium cell proliferation. Important for normal prenatal and perinatal lung development. The sequence is that of ERBB receptor feedback inhibitor 1 (Errfi1) from Rattus norvegicus (Rat).